The sequence spans 151 residues: S-protein homolog 74 (151 aa).

The first 25 residues, 1-25 (MNYIKQFILAICFYLVLTCQDHVLA), serve as a signal peptide directing secretion.

It belongs to the plant self-incompatibility (S1) protein family.

The protein localises to the secreted. This chain is S-protein homolog 74, found in Arabidopsis thaliana (Mouse-ear cress).